Here is a 312-residue protein sequence, read N- to C-terminus: Porphobilinogen deaminase (312 aa).

Position 243 is an S-(dipyrrolylmethanemethyl)cysteine (cysteine 243).

The protein belongs to the HMBS family. As to quaternary structure, monomer. It depends on dipyrromethane as a cofactor.

It carries out the reaction 4 porphobilinogen + H2O = hydroxymethylbilane + 4 NH4(+). Its pathway is porphyrin-containing compound metabolism; protoporphyrin-IX biosynthesis; coproporphyrinogen-III from 5-aminolevulinate: step 2/4. In terms of biological role, tetrapolymerization of the monopyrrole PBG into the hydroxymethylbilane pre-uroporphyrinogen in several discrete steps. The polypeptide is Porphobilinogen deaminase (Vibrio parahaemolyticus serotype O3:K6 (strain RIMD 2210633)).